An 85-amino-acid polypeptide reads, in one-letter code: uncharacterized protein (85 aa).

This is an uncharacterized protein from Saccharomyces cerevisiae (strain ATCC 204508 / S288c) (Baker's yeast).